The following is a 436-amino-acid chain: 3-phosphoshikimate 1-carboxyvinyltransferase (436 aa).

Positions 23, 24, and 28 each coordinate 3-phosphoshikimate. Lysine 23 is a binding site for phosphoenolpyruvate. The phosphoenolpyruvate site is built by glycine 97 and arginine 126. 3-phosphoshikimate is bound by residues serine 171, glutamine 173, aspartate 323, and lysine 350. Phosphoenolpyruvate is bound at residue glutamine 173. The active-site Proton acceptor is aspartate 323. Positions 354 and 396 each coordinate phosphoenolpyruvate.

It belongs to the EPSP synthase family. As to quaternary structure, monomer.

It localises to the cytoplasm. It catalyses the reaction 3-phosphoshikimate + phosphoenolpyruvate = 5-O-(1-carboxyvinyl)-3-phosphoshikimate + phosphate. It functions in the pathway metabolic intermediate biosynthesis; chorismate biosynthesis; chorismate from D-erythrose 4-phosphate and phosphoenolpyruvate: step 6/7. Catalyzes the transfer of the enolpyruvyl moiety of phosphoenolpyruvate (PEP) to the 5-hydroxyl of shikimate-3-phosphate (S3P) to produce enolpyruvyl shikimate-3-phosphate and inorganic phosphate. This is 3-phosphoshikimate 1-carboxyvinyltransferase from Prochlorococcus marinus (strain AS9601).